Here is a 219-residue protein sequence, read N- to C-terminus: Cytidylate kinase (219 aa).

ATP is bound at residue 21–29 (GPAASGKGT).

This sequence belongs to the cytidylate kinase family. Type 1 subfamily.

Its subcellular location is the cytoplasm. The enzyme catalyses CMP + ATP = CDP + ADP. It catalyses the reaction dCMP + ATP = dCDP + ADP. The polypeptide is Cytidylate kinase (Rickettsia typhi (strain ATCC VR-144 / Wilmington)).